The primary structure comprises 159 residues: MKITLITVGKVKEKYLRDAIAEYSKRLGRYCKLGIVEVADEKTPEHASDGLERQIKAKEGERIAKHIRDDAFVIALAIEGKQLTSEQLAAKINDLGLHGTSHIQLIIGGSLGLDPAILKRADYLLSFSKMTFPHQLMRVILLEQIYRAYKINAGEPYHK.

S-adenosyl-L-methionine-binding positions include Leu-76, Gly-108, and 127-132 (FSKMTF).

Belongs to the RNA methyltransferase RlmH family. As to quaternary structure, homodimer.

It localises to the cytoplasm. The catalysed reaction is pseudouridine(1915) in 23S rRNA + S-adenosyl-L-methionine = N(3)-methylpseudouridine(1915) in 23S rRNA + S-adenosyl-L-homocysteine + H(+). Its function is as follows. Specifically methylates the pseudouridine at position 1915 (m3Psi1915) in 23S rRNA. The polypeptide is Ribosomal RNA large subunit methyltransferase H (Bifidobacterium adolescentis (strain ATCC 15703 / DSM 20083 / NCTC 11814 / E194a)).